The sequence spans 735 residues: Catalase-peroxidase (735 aa).

Composition is skewed to polar residues over residues 1 to 10 (MENQNRQNAA) and 17 to 26 (SVTNQSSNRT). Positions 1–30 (MENQNRQNAAQCPFHGSVTNQSSNRTTNKD) are disordered. The tryptophyl-tyrosyl-methioninium (Trp-Tyr) (with M-249) cross-link spans 100 to 223 (WHSAGTYRIG…LAAVQMGLIY (124 aa)). The active-site Proton acceptor is the His-101. A cross-link (tryptophyl-tyrosyl-methioninium (Tyr-Met) (with W-100)) is located at residues 223 to 249 (YVNPEGPDGKPDPKAAARDIRETFRRM). His-264 lines the heme b pocket.

This sequence belongs to the peroxidase family. Peroxidase/catalase subfamily. In terms of assembly, homodimer or homotetramer. It depends on heme b as a cofactor. In terms of processing, formation of the three residue Trp-Tyr-Met cross-link is important for the catalase, but not the peroxidase activity of the enzyme.

The enzyme catalyses H2O2 + AH2 = A + 2 H2O. It carries out the reaction 2 H2O2 = O2 + 2 H2O. Its function is as follows. Bifunctional enzyme with both catalase and broad-spectrum peroxidase activity. Also displays NADH oxidase, INH lyase and isonicotinoyl-NAD synthase activities. This is Catalase-peroxidase from Geobacillus stearothermophilus (Bacillus stearothermophilus).